Here is a 187-residue protein sequence, read N- to C-terminus: Large ribosomal subunit protein uL22 (187 aa).

The disordered stretch occupies residues 155-187 (DAVSRAAPTDDAPAKKKLSKKKLARQKEKMMRE). A compositionally biased stretch (basic residues) spans 169–178 (KKKLSKKKLA).

It belongs to the universal ribosomal protein uL22 family.

The polypeptide is Large ribosomal subunit protein uL22 (RpL17) (Lonomia obliqua (Moth)).